The sequence spans 564 residues: Dihydroxy-acid dehydratase (564 aa).

D78 contributes to the Mg(2+) binding site. C119 provides a ligand contact to [2Fe-2S] cluster. Residues D120 and K121 each contribute to the Mg(2+) site. At K121 the chain carries N6-carboxylysine. Position 192 (C192) interacts with [2Fe-2S] cluster. E451 is a Mg(2+) binding site. S477 acts as the Proton acceptor in catalysis.

The protein belongs to the IlvD/Edd family. Homodimer. [2Fe-2S] cluster is required as a cofactor. It depends on Mg(2+) as a cofactor.

It catalyses the reaction (2R)-2,3-dihydroxy-3-methylbutanoate = 3-methyl-2-oxobutanoate + H2O. The catalysed reaction is (2R,3R)-2,3-dihydroxy-3-methylpentanoate = (S)-3-methyl-2-oxopentanoate + H2O. The protein operates within amino-acid biosynthesis; L-isoleucine biosynthesis; L-isoleucine from 2-oxobutanoate: step 3/4. It participates in amino-acid biosynthesis; L-valine biosynthesis; L-valine from pyruvate: step 3/4. Its function is as follows. Functions in the biosynthesis of branched-chain amino acids. Catalyzes the dehydration of (2R,3R)-2,3-dihydroxy-3-methylpentanoate (2,3-dihydroxy-3-methylvalerate) into 2-oxo-3-methylpentanoate (2-oxo-3-methylvalerate) and of (2R)-2,3-dihydroxy-3-methylbutanoate (2,3-dihydroxyisovalerate) into 2-oxo-3-methylbutanoate (2-oxoisovalerate), the penultimate precursor to L-isoleucine and L-valine, respectively. This is Dihydroxy-acid dehydratase from Nitratiruptor sp. (strain SB155-2).